A 201-amino-acid polypeptide reads, in one-letter code: Glutathione peroxidase 1 (201 aa).

Residues Ser-7 and Ser-32 each carry the phosphoserine modification. Residue Sec-47 is part of the active site. Position 47 (Sec-47) is a non-standard amino acid, selenocysteine. Lys-62, Lys-86, and Lys-112 each carry N6-acetyllysine; alternate. An N6-succinyllysine; alternate mark is found at Lys-62, Lys-86, and Lys-112. Position 119 is an N6-acetyllysine (Lys-119). Lys-146 bears the N6-acetyllysine; alternate mark. Lys-146 is subject to N6-succinyllysine; alternate. Phosphoserine is present on Ser-195.

The protein belongs to the glutathione peroxidase family. As to quaternary structure, homotetramer. Interacts with MIEN1. In terms of processing, during periods of oxidative stress, Sec-47 may react with a superoxide radical, irreversibly lose hydroselenide and be converted to dehydroalanine. Expressed in liver, kidney, lung, brain and heart.

It localises to the cytoplasm. The protein resides in the mitochondrion. The enzyme catalyses 2 glutathione + H2O2 = glutathione disulfide + 2 H2O. The catalysed reaction is a hydroperoxy polyunsaturated fatty acid + 2 glutathione = a hydroxy polyunsaturated fatty acid + glutathione disulfide + H2O. It catalyses the reaction tert-butyl hydroperoxide + 2 glutathione = tert-butanol + glutathione disulfide + H2O. It carries out the reaction cumene hydroperoxide + 2 glutathione = 2-phenylpropan-2-ol + glutathione disulfide + H2O. The enzyme catalyses (13S)-hydroperoxy-(9Z,11E)-octadecadienoate + 2 glutathione = (13S)-hydroxy-(9Z,11E)-octadecadienoate + glutathione disulfide + H2O. The catalysed reaction is (9S)-hydroperoxy-(10E,12Z)-octadecadienoate + 2 glutathione = (9S)-hydroxy-(10E,12Z)-octadecadienoate + glutathione disulfide + H2O. It catalyses the reaction (5S)-hydroperoxy-(6E,8Z,11Z,14Z)-eicosatetraenoate + 2 glutathione = (5S)-hydroxy-(6E,8Z,11Z,14Z)-eicosatetraenoate + glutathione disulfide + H2O. It carries out the reaction (12S)-hydroperoxy-(5Z,8Z,10E,14Z)-eicosatetraenoate + 2 glutathione = (12S)-hydroxy-(5Z,8Z,10E,14Z)-eicosatetraenoate + glutathione disulfide + H2O. The enzyme catalyses (12R)-hydroperoxy-(5Z,8Z,10E,14Z)-eicosatetraenoate + 2 glutathione = (12R)-hydroxy-(5Z,8Z,10E,14Z)-eicosatetraenoate + glutathione disulfide + H2O. The catalysed reaction is (15S)-hydroperoxy-(5Z,8Z,11Z,13E)-eicosatetraenoate + 2 glutathione = (15S)-hydroxy-(5Z,8Z,11Z,13E)-eicosatetraenoate + glutathione disulfide + H2O. It catalyses the reaction (5S)-hydroperoxy-(6E,8Z,11Z,14Z,17Z)-eicosapentaenoate + 2 glutathione = (5S)-hydroxy-(6E,8Z,11Z,14Z,17Z)-eicosapentaenoate + glutathione disulfide + H2O. It carries out the reaction (12S)-hydroperoxy-(5Z,8Z,10E,14Z,17Z)-eicosapentaenoate + 2 glutathione = (12S)-hydroxy-(5Z,8Z,10E,14Z,17Z)-eicosapentaenoate + glutathione disulfide + H2O. The enzyme catalyses (15S)-hydroperoxy-(5Z,8Z,11Z,13E,17Z)-eicosapentaenoate + 2 glutathione = (15S)-hydroxy-(5Z,8Z,11Z,13E,17Z)-eicosapentaenoate + glutathione disulfide + H2O. The catalysed reaction is (15S)-hydroperoxy-(11Z,13E)-eicosadienoate + 2 glutathione = (15S)-hydroxy-(11Z,13E)-eicosadienoate + glutathione disulfide + H2O. It catalyses the reaction (17S)-hydroperoxy-(4Z,7Z,10Z,13Z,15E,19Z)-docosahexaenoate + 2 glutathione = (17S)-hydroxy-(4Z,7Z,10Z,13Z,15E,19Z)-docosahexaenoate + glutathione disulfide + H2O. Functionally, catalyzes the reduction of hydroperoxides in a glutathione-dependent manner thus regulating cellular redox homeostasis. Can reduce small soluble hydroperoxides such as H2O2, cumene hydroperoxide and tert-butyl hydroperoxide, as well as several fatty acid-derived hydroperoxides. In platelets catalyzes the reduction of 12-hydroperoxyeicosatetraenoic acid, the primary product of the arachidonate 12-lipoxygenase pathway. This Mus musculus (Mouse) protein is Glutathione peroxidase 1.